A 543-amino-acid polypeptide reads, in one-letter code: Glucose-6-phosphate isomerase (543 aa).

The Proton donor role is filled by glutamate 353. Active-site residues include histidine 384 and lysine 504.

Belongs to the GPI family.

It is found in the cytoplasm. It carries out the reaction alpha-D-glucose 6-phosphate = beta-D-fructose 6-phosphate. Its pathway is carbohydrate biosynthesis; gluconeogenesis. It participates in carbohydrate degradation; glycolysis; D-glyceraldehyde 3-phosphate and glycerone phosphate from D-glucose: step 2/4. Catalyzes the reversible isomerization of glucose-6-phosphate to fructose-6-phosphate. This chain is Glucose-6-phosphate isomerase, found in Roseiflexus castenholzii (strain DSM 13941 / HLO8).